We begin with the raw amino-acid sequence, 241 residues long: Small ribosomal subunit protein uS5 (241 aa).

The interval 1 to 53 is disordered; sequence MSDNEKETQVAEETQNTQAAAESNNEDRKSRRGQRGEGRRGERRNRREESHEN. The segment covering 11–22 has biased composition (low complexity); sequence AEETQNTQAAAE. The span at 25 to 53 shows a compositional bias: basic and acidic residues; sequence NEDRKSRRGQRGEGRRGERRNRREESHEN. Positions 55–118 constitute an S5 DRBM domain; it reads MLDRVVTINR…LDAKKHMFTV (64 aa).

This sequence belongs to the universal ribosomal protein uS5 family. Part of the 30S ribosomal subunit. Contacts proteins S4 and S8.

With S4 and S12 plays an important role in translational accuracy. Functionally, located at the back of the 30S subunit body where it stabilizes the conformation of the head with respect to the body. This is Small ribosomal subunit protein uS5 from Bifidobacterium adolescentis (strain ATCC 15703 / DSM 20083 / NCTC 11814 / E194a).